A 67-amino-acid chain; its full sequence is ATP synthase F(0) complex subunit 8 (67 aa).

A helical transmembrane segment spans residues T8 to F24. The residue at position 54 (K54) is an N6-acetyllysine; alternate. K54 is subject to N6-succinyllysine; alternate. Residue K57 is modified to N6-acetyllysine.

This sequence belongs to the ATPase protein 8 family. As to quaternary structure, component of the ATP synthase complex composed at least of ATP5F1A/subunit alpha, ATP5F1B/subunit beta, ATP5MC1/subunit c (homooctomer), MT-ATP6/subunit a, MT-ATP8/subunit 8, ATP5ME/subunit e, ATP5MF/subunit f, ATP5MG/subunit g, ATP5MK/subunit k, ATP5MJ/subunit j, ATP5F1C/subunit gamma, ATP5F1D/subunit delta, ATP5F1E/subunit epsilon, ATP5PF/subunit F6, ATP5PB/subunit b, ATP5PD/subunit d, ATP5PO/subunit OSCP. ATP synthase complex consists of a soluble F(1) head domain (subunits alpha(3) and beta(3)) - the catalytic core - and a membrane F(0) domain - the membrane proton channel (subunits c, a, 8, e, f, g, k and j). These two domains are linked by a central stalk (subunits gamma, delta, and epsilon) rotating inside the F1 region and a stationary peripheral stalk (subunits F6, b, d, and OSCP). Interacts with PRICKLE3.

The protein resides in the mitochondrion membrane. Its function is as follows. Subunit 8, of the mitochondrial membrane ATP synthase complex (F(1)F(0) ATP synthase or Complex V) that produces ATP from ADP in the presence of a proton gradient across the membrane which is generated by electron transport complexes of the respiratory chain. ATP synthase complex consist of a soluble F(1) head domain - the catalytic core - and a membrane F(1) domain - the membrane proton channel. These two domains are linked by a central stalk rotating inside the F(1) region and a stationary peripheral stalk. During catalysis, ATP synthesis in the catalytic domain of F(1) is coupled via a rotary mechanism of the central stalk subunits to proton translocation. In vivo, can only synthesize ATP although its ATP hydrolase activity can be activated artificially in vitro. Part of the complex F(0) domain. The chain is ATP synthase F(0) complex subunit 8 from Talpa europaea (European mole).